A 425-amino-acid chain; its full sequence is Riboflavin biosynthesis protein RibBA (425 aa).

Positions 1–204 (MTRLDSVERA…IADLIEWRRK (204 aa)) are DHBP synthase. D-ribulose 5-phosphate-binding positions include 28–29 (RE), Asp-33, 141–145 (RPGHT), and Glu-165. Residue Glu-29 participates in Mg(2+) binding. Mg(2+) is bound at residue His-144. The segment at 205–425 (HEKHIERVAE…HLPGEFGGAL (221 aa)) is GTP cyclohydrolase II. A GTP-binding site is contributed by 259–263 (RVHSE). Positions 264, 275, and 277 each coordinate Zn(2+). Residues Gln-280, 303–305 (EGR), and Thr-325 each bind GTP. The active-site Proton acceptor; for GTP cyclohydrolase activity is the Asp-337. The active-site Nucleophile; for GTP cyclohydrolase activity is the Arg-339. GTP contacts are provided by Thr-360 and Lys-365.

This sequence in the N-terminal section; belongs to the DHBP synthase family. It in the C-terminal section; belongs to the GTP cyclohydrolase II family. Mg(2+) is required as a cofactor. Requires Mn(2+) as cofactor. It depends on Zn(2+) as a cofactor.

It carries out the reaction D-ribulose 5-phosphate = (2S)-2-hydroxy-3-oxobutyl phosphate + formate + H(+). It catalyses the reaction GTP + 4 H2O = 2,5-diamino-6-hydroxy-4-(5-phosphoribosylamino)-pyrimidine + formate + 2 phosphate + 3 H(+). It participates in cofactor biosynthesis; riboflavin biosynthesis; 2-hydroxy-3-oxobutyl phosphate from D-ribulose 5-phosphate: step 1/1. Its pathway is cofactor biosynthesis; riboflavin biosynthesis; 5-amino-6-(D-ribitylamino)uracil from GTP: step 1/4. Functionally, catalyzes the conversion of D-ribulose 5-phosphate to formate and 3,4-dihydroxy-2-butanone 4-phosphate. Its function is as follows. Catalyzes the conversion of GTP to 2,5-diamino-6-ribosylamino-4(3H)-pyrimidinone 5'-phosphate (DARP), formate and pyrophosphate. The chain is Riboflavin biosynthesis protein RibBA from Mycobacterium bovis (strain ATCC BAA-935 / AF2122/97).